The following is a 239-amino-acid chain: tRNA (guanine-N(1)-)-methyltransferase (239 aa).

S-adenosyl-L-methionine contacts are provided by residues Gly108 and 127–132; that span reads LGDFVL.

The protein belongs to the RNA methyltransferase TrmD family. In terms of assembly, homodimer.

Its subcellular location is the cytoplasm. The catalysed reaction is guanosine(37) in tRNA + S-adenosyl-L-methionine = N(1)-methylguanosine(37) in tRNA + S-adenosyl-L-homocysteine + H(+). Specifically methylates guanosine-37 in various tRNAs. This Streptococcus pyogenes serotype M6 (strain ATCC BAA-946 / MGAS10394) protein is tRNA (guanine-N(1)-)-methyltransferase.